Consider the following 350-residue polypeptide: DNA repair protein rhp55 (350 aa).

Gly51–Thr58 contacts ATP. A disordered region spans residues Gln331–Ser350.

Belongs to the RecA family. RAD55 subfamily.

Its subcellular location is the nucleus. Its function is as follows. Required for radiation resistance and meiotic viability and acts in recombination and recombinational DNA repair pathways. In Schizosaccharomyces pombe (strain 972 / ATCC 24843) (Fission yeast), this protein is DNA repair protein rhp55 (rhp55).